The chain runs to 222 residues: Phosphoribosylformylglycinamidine synthase subunit PurQ (222 aa).

The region spanning 2-222 (SVAIVRFPGT…DNLLHIAEMK (221 aa)) is the Glutamine amidotransferase type-1 domain. Cys-86 (nucleophile) is an active-site residue. Catalysis depends on residues His-194 and Glu-196.

In terms of assembly, part of the FGAM synthase complex composed of 1 PurL, 1 PurQ and 2 PurS subunits.

Its subcellular location is the cytoplasm. It carries out the reaction N(2)-formyl-N(1)-(5-phospho-beta-D-ribosyl)glycinamide + L-glutamine + ATP + H2O = 2-formamido-N(1)-(5-O-phospho-beta-D-ribosyl)acetamidine + L-glutamate + ADP + phosphate + H(+). The catalysed reaction is L-glutamine + H2O = L-glutamate + NH4(+). Its pathway is purine metabolism; IMP biosynthesis via de novo pathway; 5-amino-1-(5-phospho-D-ribosyl)imidazole from N(2)-formyl-N(1)-(5-phospho-D-ribosyl)glycinamide: step 1/2. Part of the phosphoribosylformylglycinamidine synthase complex involved in the purines biosynthetic pathway. Catalyzes the ATP-dependent conversion of formylglycinamide ribonucleotide (FGAR) and glutamine to yield formylglycinamidine ribonucleotide (FGAM) and glutamate. The FGAM synthase complex is composed of three subunits. PurQ produces an ammonia molecule by converting glutamine to glutamate. PurL transfers the ammonia molecule to FGAR to form FGAM in an ATP-dependent manner. PurS interacts with PurQ and PurL and is thought to assist in the transfer of the ammonia molecule from PurQ to PurL. This is Phosphoribosylformylglycinamidine synthase subunit PurQ from Helicobacter hepaticus (strain ATCC 51449 / 3B1).